Consider the following 496-residue polypeptide: MSGLPRSVPDVLDPLGPGAPVLVAGGRVTGQAVAAVLTRFGATPTVCDDDPVMLRPHAERGLPTVSSSDAVQQITGYALVVASPGFSPAIPLLAAAAAAGVPIWGDVELAWRLDAAGCYGPPRSWLVVTGTNGKTTTTSMLHAMLIAGGRRAVLCGNIGSAVLDVLDEPAELLAVELSSFQLHWAPSLRPEAGAVLNIAEDHLDWHATMAEYTAAKARVLTGGVAVAGLDDSRAAALLDGSPAQVRVGFRLGEPAAGELGVRDAHLVDRAFSDDLTLLPVASIPVPGPVGVLDALAAAALARSVGVPAGAIADAVTSFRVGRHRAEVVAVADGITYVDDSKATNPHAARASVLAYPRVVWIAGGLLKGASLHAEVAAMASRLVGAVLIGRDRAAVAEALSRHAPDVPVVQVVAGEDTGMPATVEVPVACVLDVAKDDKAGETVGAAVMTAAVAAARRMAQPGDTVLLAPAGASFDQFTGYADRGEAFATAVRAVIR.

130 to 136 (GTNGKTT) contacts ATP.

Belongs to the MurCDEF family.

Its subcellular location is the cytoplasm. The catalysed reaction is UDP-N-acetyl-alpha-D-muramoyl-L-alanine + D-glutamate + ATP = UDP-N-acetyl-alpha-D-muramoyl-L-alanyl-D-glutamate + ADP + phosphate + H(+). It functions in the pathway cell wall biogenesis; peptidoglycan biosynthesis. Its function is as follows. Cell wall formation. Catalyzes the addition of glutamate to the nucleotide precursor UDP-N-acetylmuramoyl-L-alanine (UMA). The chain is UDP-N-acetylmuramoylalanine--D-glutamate ligase (murD) from Mycobacterium tuberculosis (strain CDC 1551 / Oshkosh).